Here is a 499-residue protein sequence, read N- to C-terminus: Cobyric acid synthase (499 aa).

The region spanning 266 to 449 (RLEIAVVRLP…LHGLFDNHLW (184 aa)) is the GATase cobBQ-type domain. C344 serves as the catalytic Nucleophile. H441 is an active-site residue.

The protein belongs to the CobB/CobQ family. CobQ subfamily.

It participates in cofactor biosynthesis; adenosylcobalamin biosynthesis. Functionally, catalyzes amidations at positions B, D, E, and G on adenosylcobyrinic A,C-diamide. NH(2) groups are provided by glutamine, and one molecule of ATP is hydrogenolyzed for each amidation. The protein is Cobyric acid synthase of Synechococcus sp. (strain JA-2-3B'a(2-13)) (Cyanobacteria bacterium Yellowstone B-Prime).